The following is a 26-amino-acid chain: Hemocyanin subunit 5 (26 aa).

Belongs to the tyrosinase family. Hemocyanin subfamily. As to expression, hemolymph.

Its subcellular location is the secreted. It localises to the extracellular space. Its function is as follows. Hemocyanins are copper-containing oxygen carriers occurring freely dissolved in the hemolymph of many mollusks and arthropods. This chain is Hemocyanin subunit 5, found in Maja squinado (Mediterranean spider crab).